The primary structure comprises 267 residues: MLDFVGLGLFDEKDISLKGLEKIHNADKVYVEFYTSILMGTDLEKMEMLYKKKITVLSREDVEQHAEDWLVDAKDSNVVFLTGGDTMVSTTHVDLRLRAADMGIKTTLIHGASIASAICGLSGLQNYRFGKSVTIPHPYVSNRGVRVVSQTPYDTIKNNIEAGLHTAVFLDIDKDKGYMTVNQAMEILLEVEGKLGEGVMVDRLAVGIARAGSPSPVVKADYIEALRDYYLGGPLHIVVIPAELHFVEAEALVKLAGAPEGILENID.

Residues Leu9, Asp85, Val88, 113-114 (SI), Leu170, Ala211, and His236 contribute to the S-adenosyl-L-methionine site.

Belongs to the diphthine synthase family. As to quaternary structure, homodimer.

It carries out the reaction 2-[(3S)-amino-3-carboxypropyl]-L-histidyl-[translation elongation factor 2] + 3 S-adenosyl-L-methionine = diphthine-[translation elongation factor 2] + 3 S-adenosyl-L-homocysteine + 3 H(+). The protein operates within protein modification; peptidyl-diphthamide biosynthesis. S-adenosyl-L-methionine-dependent methyltransferase that catalyzes the trimethylation of the amino group of the modified target histidine residue in translation elongation factor 2 (EF-2), to form an intermediate called diphthine. The three successive methylation reactions represent the second step of diphthamide biosynthesis. In Methanococcoides burtonii (strain DSM 6242 / NBRC 107633 / OCM 468 / ACE-M), this protein is Diphthine synthase.